The sequence spans 906 residues: Protein translocase subunit SecA (906 aa).

ATP contacts are provided by residues Gln-87, 105-109 (GEGKT), and Asp-512. The segment at 879–906 (REGEKIGRNDPCPCGSGQKYKQCHGKLS) is disordered. Residues Cys-890, Cys-892, Cys-901, and His-902 each contribute to the Zn(2+) site.

It belongs to the SecA family. Monomer and homodimer. Part of the essential Sec protein translocation apparatus which comprises SecA, SecYEG and auxiliary proteins SecDF-YajC and YidC. Requires Zn(2+) as cofactor.

It localises to the cell inner membrane. The protein localises to the cytoplasm. It carries out the reaction ATP + H2O + cellular proteinSide 1 = ADP + phosphate + cellular proteinSide 2.. Its function is as follows. Part of the Sec protein translocase complex. Interacts with the SecYEG preprotein conducting channel. Has a central role in coupling the hydrolysis of ATP to the transfer of proteins into and across the cell membrane, serving both as a receptor for the preprotein-SecB complex and as an ATP-driven molecular motor driving the stepwise translocation of polypeptide chains across the membrane. This is Protein translocase subunit SecA from Shewanella frigidimarina (strain NCIMB 400).